A 272-amino-acid chain; its full sequence is NH(3)-dependent NAD(+) synthetase (272 aa).

Tyr33 contributes to the deamido-NAD(+) binding site. ATP-binding positions include Gly45 to Ser52, Arg79, and Gln85. Asp51 contacts Mg(2+). Arg138 contacts deamido-NAD(+). ATP is bound at residue Thr158. Glu163 contacts Mg(2+). Positions 171 and 178 each coordinate deamido-NAD(+). 2 residues coordinate ATP: Lys187 and Thr209. Deamido-NAD(+) is bound by residues Glu224 and His258 to Lys259.

The protein belongs to the NAD synthetase family. Homodimer. Post-translationally, phosphorylated during sporulation.

It catalyses the reaction deamido-NAD(+) + NH4(+) + ATP = AMP + diphosphate + NAD(+) + H(+). It participates in cofactor biosynthesis; NAD(+) biosynthesis; NAD(+) from deamido-NAD(+) (ammonia route): step 1/1. Its function is as follows. Catalyzes the ATP-dependent amidation of deamido-NAD to form NAD. Uses ammonia as a nitrogen source. In Bacillus subtilis (strain 168), this protein is NH(3)-dependent NAD(+) synthetase.